The sequence spans 644 residues: Exoribonuclease 2 (644 aa).

One can recognise an RNB domain in the interval 189-516; sequence RQDLTALNFV…NHRLLKAVIK (328 aa). The S1 motif domain occupies 561–643; that stretch reads NTRFAAEIID…ETRSIIARPA (83 aa).

The protein belongs to the RNR ribonuclease family. RNase II subfamily.

It is found in the cytoplasm. The enzyme catalyses Exonucleolytic cleavage in the 3'- to 5'-direction to yield nucleoside 5'-phosphates.. Its function is as follows. Involved in mRNA degradation. Hydrolyzes single-stranded polyribonucleotides processively in the 3' to 5' direction. In Salmonella paratyphi B (strain ATCC BAA-1250 / SPB7), this protein is Exoribonuclease 2.